A 418-amino-acid polypeptide reads, in one-letter code: Cell division protein FtsA (418 aa).

This sequence belongs to the FtsA/MreB family. As to quaternary structure, self-interacts. Interacts with FtsZ.

The protein localises to the cell inner membrane. In terms of biological role, cell division protein that is involved in the assembly of the Z ring. May serve as a membrane anchor for the Z ring. The sequence is that of Cell division protein FtsA from Buchnera aphidicola subsp. Acyrthosiphon pisum (strain APS) (Acyrthosiphon pisum symbiotic bacterium).